A 402-amino-acid chain; its full sequence is AA9 family lytic polysaccharide monooxygenase E (402 aa).

Residues 1–16 (MSRLVSFASLLAAVNA) form the signal peptide. Residue His-17 coordinates Cu(2+). Cystine bridges form between Cys-72-Cys-194 and Cys-113-Cys-117. N-linked (GlcNAc...) asparagine glycosylation occurs at Asn-75. Cu(2+) is bound at residue His-102. Asn-154 is a glycosylation site (N-linked (GlcNAc...) asparagine). Positions 180 and 189 each coordinate O2. Residue Tyr-191 coordinates Cu(2+). Positions 364–400 (GSNPLYAQCGGLNFKGASGCVAGATCKKMNPYYSQCV) constitute a CBM1 domain.

It belongs to the polysaccharide monooxygenase AA9 family. Cu(2+) is required as a cofactor.

Its subcellular location is the secreted. The enzyme catalyses [(1-&gt;4)-beta-D-glucosyl]n+m + reduced acceptor + O2 = 4-dehydro-beta-D-glucosyl-[(1-&gt;4)-beta-D-glucosyl]n-1 + [(1-&gt;4)-beta-D-glucosyl]m + acceptor + H2O.. Its function is as follows. Lytic polysaccharide monooxygenase (LPMO) that depolymerizes crystalline and amorphous polysaccharides via the oxidation of scissile alpha- or beta-(1-4)-glycosidic bonds, yielding C1 or C4 oxidation products. Catalysis by LPMOs requires the reduction of the active-site copper from Cu(II) to Cu(I) by a reducing agent and H(2)O(2) or O(2) as a cosubstrate. The polypeptide is AA9 family lytic polysaccharide monooxygenase E (Emericella nidulans (strain FGSC A4 / ATCC 38163 / CBS 112.46 / NRRL 194 / M139) (Aspergillus nidulans)).